Here is a 21-residue protein sequence, read N- to C-terminus: Chlorophyllase type 2 (21 aa).

It belongs to the AB hydrolase superfamily. Lipase family.

The catalysed reaction is a chlorophyll + H2O = a chlorophyllide + phytol + H(+). Its pathway is porphyrin-containing compound metabolism; chlorophyll degradation. Its function is as follows. Catalyzes the hydrolysis of ester bond in chlorophyll to yield chlorophyllide and phytol. This Chenopodium album (Fat hen) protein is Chlorophyllase type 2.